Here is a 581-residue protein sequence, read N- to C-terminus: Chaperonin GroEL 1 (581 aa).

Residues 29–32, 86–90, G413, and D492 each bind ATP; these read TIGP and DGTTT. Residues 522–543 form a disordered region; that stretch reads PEPEPAAPGGPSGDPMGGMGGM. The span at 531-543 shows a compositional bias: gly residues; the sequence is GPSGDPMGGMGGM.

It belongs to the chaperonin (HSP60) family. In terms of assembly, forms a cylinder of 14 subunits composed of two heptameric rings stacked back-to-back. Interacts with the co-chaperonin GroES.

The protein resides in the cytoplasm. The enzyme catalyses ATP + H2O + a folded polypeptide = ADP + phosphate + an unfolded polypeptide.. Functionally, together with its co-chaperonin GroES, plays an essential role in assisting protein folding. The GroEL-GroES system forms a nano-cage that allows encapsulation of the non-native substrate proteins and provides a physical environment optimized to promote and accelerate protein folding. This is Chaperonin GroEL 1 from Prochlorococcus marinus (strain MIT 9215).